A 332-amino-acid chain; its full sequence is HPr kinase/phosphorylase (332 aa).

Active-site residues include H153 and K174. 168–175 (GKSGLGKS) lines the ATP pocket. S175 is a binding site for Mg(2+). D192 (proton acceptor; for phosphorylation activity. Proton donor; for dephosphorylation activity) is an active-site residue. An important for the catalytic mechanism of both phosphorylation and dephosphorylation region spans residues 217 to 226 (MEIRGLGVVD). E218 is a Mg(2+) binding site. The active site involves R259. An important for the catalytic mechanism of dephosphorylation region spans residues 280–285 (PIFPGK).

The protein belongs to the HPrK/P family. As to quaternary structure, homohexamer. Requires Mg(2+) as cofactor.

It catalyses the reaction [HPr protein]-L-serine + ATP = [HPr protein]-O-phospho-L-serine + ADP + H(+). The catalysed reaction is [HPr protein]-O-phospho-L-serine + phosphate + H(+) = [HPr protein]-L-serine + diphosphate. In terms of biological role, catalyzes the ATP- as well as the pyrophosphate-dependent phosphorylation of a specific serine residue in HPr, a phosphocarrier protein of the phosphoenolpyruvate-dependent sugar phosphotransferase system (PTS). HprK/P also catalyzes the pyrophosphate-producing, inorganic phosphate-dependent dephosphorylation (phosphorolysis) of seryl-phosphorylated HPr (P-Ser-HPr). The protein is HPr kinase/phosphorylase of Chlorobium phaeovibrioides (strain DSM 265 / 1930) (Prosthecochloris vibrioformis (strain DSM 265)).